The sequence spans 1755 residues: Transposon Ty1-GR2 Gag-Pol polyprotein (1755 aa).

Positions 1–16 (MESQQLSQHSHISHGS) are enriched in low complexity. 3 disordered regions span residues 1–93 (MESQ…MMTQ), 126–173 (PQSQ…RPPP), and 352–421 (GSRN…SKST). Polar residues-rich tracts occupy residues 48–60 (TKAN…TPAS) and 127–152 (QSQF…GNTF). Residues 153-165 (TDSSSADSDMTST) show a composition bias toward low complexity. The segment at 299-401 (NNGIHINNKV…NSKSKTARAH (103 aa)) is RNA-binding. Positions 402 to 418 (NVSTSNNSPSTDNDSIS) are enriched in low complexity. Phosphoserine is present on Ser-416. Asp-461 acts as the For protease activity; shared with dimeric partner in catalysis. The interval 583–640 (NVHTSESTRKYPYPFIHRMLAHANAQTIRYSLKNNTITYFNESDVDWSSAIDYQCPDC) is integrase-type zinc finger-like. Residues 660 to 835 (NSYEPFQYLH…AGLDISTLLP (176 aa)) form the Integrase catalytic domain. Mg(2+) is bound by residues Asp-671 and Asp-736. Disordered stretches follow at residues 956 to 1087 (SKAV…ETEK), 1092 to 1111 (RSPS…NIVP), and 1130 to 1187 (DLPL…DNET). Residues 960–969 (SPTDSTPPST) show a composition bias toward low complexity. The span at 1005 to 1015 (STPQISNIEST) shows a compositional bias: polar residues. Over residues 1038-1053 (ESSHASKSKDFRHSDS) the composition is skewed to basic and acidic residues. Polar residues-rich tracts occupy residues 1054 to 1082 (YSEN…QISD) and 1101 to 1111 (PENNSSHNIVP). A Bipartite nuclear localization signal motif is present at residues 1178–1212 (KKRSLEDNETEIKVSRDTWNTKNMRSLEPPRSKKR). Residues 1338–1476 (NNYYITQLDI…DILGLEIKYQ (139 aa)) enclose the Reverse transcriptase Ty1/copia-type domain. Residues Asp-1346, Asp-1427, Asp-1428, Asp-1610, Glu-1652, and Asp-1685 each contribute to the Mg(2+) site. The region spanning 1610-1752 (DASYGNQPYY…IKTFKLLTNK (143 aa)) is the RNase H Ty1/copia-type domain.

As to quaternary structure, the capsid protein forms a homotrimer, from which the VLPs are assembled. The protease is a homodimer, whose active site consists of two apposed aspartic acid residues. In terms of processing, initially, virus-like particles (VLPs) are composed of the structural unprocessed proteins Gag and Gag-Pol, and also contain the host initiator methionine tRNA (tRNA(i)-Met) which serves as a primer for minus-strand DNA synthesis, and a dimer of genomic Ty RNA. Processing of the polyproteins occurs within the particle and proceeds by an ordered pathway, called maturation. First, the protease (PR) is released by autocatalytic cleavage of the Gag-Pol polyprotein yielding capsid protein p45 and a Pol-p154 precursor protein. This cleavage is a prerequisite for subsequent processing of Pol-p154 at the remaining sites to release the mature structural and catalytic proteins. Maturation takes place prior to the RT reaction and is required to produce transposition-competent VLPs.

The protein resides in the cytoplasm. Its subcellular location is the nucleus. It catalyses the reaction DNA(n) + a 2'-deoxyribonucleoside 5'-triphosphate = DNA(n+1) + diphosphate. The catalysed reaction is Endonucleolytic cleavage to 5'-phosphomonoester.. Its function is as follows. Capsid protein (CA) is the structural component of the virus-like particle (VLP), forming the shell that encapsulates the retrotransposons dimeric RNA genome. The particles are assembled from trimer-clustered units and there are holes in the capsid shells that allow for the diffusion of macromolecules. CA also has nucleocapsid-like chaperone activity, promoting primer tRNA(i)-Met annealing to the multipartite primer-binding site (PBS), dimerization of Ty1 RNA and initiation of reverse transcription. In terms of biological role, the aspartyl protease (PR) mediates the proteolytic cleavages of the Gag and Gag-Pol polyproteins after assembly of the VLP. Reverse transcriptase/ribonuclease H (RT) is a multifunctional enzyme that catalyzes the conversion of the retro-elements RNA genome into dsDNA within the VLP. The enzyme displays a DNA polymerase activity that can copy either DNA or RNA templates, and a ribonuclease H (RNase H) activity that cleaves the RNA strand of RNA-DNA heteroduplexes during plus-strand synthesis and hydrolyzes RNA primers. The conversion leads to a linear dsDNA copy of the retrotransposon that includes long terminal repeats (LTRs) at both ends. Functionally, integrase (IN) targets the VLP to the nucleus, where a subparticle preintegration complex (PIC) containing at least integrase and the newly synthesized dsDNA copy of the retrotransposon must transit the nuclear membrane. Once in the nucleus, integrase performs the integration of the dsDNA into the host genome. This is Transposon Ty1-GR2 Gag-Pol polyprotein (TY1B-GR2) from Saccharomyces cerevisiae (strain ATCC 204508 / S288c) (Baker's yeast).